The chain runs to 37 residues: Large ribosomal subunit protein bL36 (37 aa).

This sequence belongs to the bacterial ribosomal protein bL36 family.

The chain is Large ribosomal subunit protein bL36 from Shewanella woodyi (strain ATCC 51908 / MS32).